Consider the following 1070-residue polypeptide: Duffy receptor (1070 aa).

Residues 1–20 (MKGKNRSLFVLLVLLLLHKV) form the signal peptide. Residues 21–1007 (NNVLLERTIE…CFTKGGFKDK (987 aa)) lie on the Extracellular side of the membrane. A disordered region spans residues 116–146 (YMEGKDGGDKTGEEKDGEHKTDSKTDNGKGA). Positions 118 to 142 (EGKDGGDKTGEEKDGEHKTDSKTDN) are enriched in basic and acidic residues. An N-linked (GlcNAc...) asparagine glycan is attached at Asn183. Residues 211–521 (NTVMKNCNYK…AKKNTQEVVT (311 aa)) are pvRII region; mediates ACKR1 binding. 2 disulfides stabilise this stretch: Cys217-Cys246 and Cys230-Cys237. Residues Asn255, Asn351, and Asn420 are each glycosylated (N-linked (GlcNAc...) asparagine). 4 disulfide bridges follow: Cys300–Cys377, Cys415–Cys432, Cys427–Cys507, and Cys436–Cys505. 3 stretches are compositionally biased toward polar residues: residues 525-542 (NAAK…QPVD), 554-569 (THGN…TTGK), and 629-642 (GASN…TVEA). Residues 525–906 (NAAKSQATNS…HLNSNNNLSN (382 aa)) are disordered. Residues 697–711 (ETGKGQDNDMAKATK) are compositionally biased toward basic and acidic residues. Over residues 712-728 (DSSNSSDGTSSATGDTT) the composition is skewed to low complexity. Asn715 carries N-linked (GlcNAc...) asparagine glycosylation. The span at 730-748 (AVDREINKGVPEDRDKTVG) shows a compositional bias: basic and acidic residues. Asn787 carries N-linked (GlcNAc...) asparagine glycosylation. Over residues 808-817 (LSKTESLEST) the composition is skewed to low complexity. A glycan (N-linked (GlcNAc...) asparagine) is linked at Asn825. 2 stretches are compositionally biased toward basic and acidic residues: residues 835 to 849 (NGGK…DFKS) and 865 to 889 (AEGH…KDTF). Over residues 895–906 (SHHLNSNNNLSN) the composition is skewed to low complexity. Asn903 and Asn938 each carry an N-linked (GlcNAc...) asparagine glycan. The chain crosses the membrane as a helical span at residues 1008 to 1025 (TYFAAAGALLILLLLIAS). Residues 1026-1070 (RKMIKNDSEEATFNEFEEYCDNIHRIPLMPNNIEHMQPSTPLDYS) lie on the Cytoplasmic side of the membrane.

As to quaternary structure, homodimer; dimerization (via PvRII region) is promoted by the interaction with human ACKR1. Interacts (via PvRII region) with human ACKR1 (via N-terminal extracellular domain).

Its subcellular location is the membrane. Its function is as follows. Binds to the human erythrocyte Duffy blood group determinant (ACKR1). This chain is Duffy receptor (PVDR), found in Plasmodium vivax (strain Salvador I).